A 238-amino-acid chain; its full sequence is MGQAIFMTGTGTEIGKTVVTSIVALALERLGMSVSVLKPVQTGLAEDGVSFAEQYWYERVAKLSASEGMYYMEPAMSPHLAAKLTGTSIEPERVAERLEWLKQRYDVVLVEGAGGLAVPWCERDGRFYMTSDFLRDYQLPAILVSLSSLGAIHHAVTTAAYADAQGIRLLGLMFNQFQEQEIIHQNNVETIAALLRLPVLAVVPLLPAVSRRELETLAQHWIEQGKAKQLLEVLGVGV.

13–18 (EIGKTV) contacts ATP. Thr-17 provides a ligand contact to Mg(2+). Lys-38 is a catalytic residue. Substrate is bound at residue Thr-42. Positions 59 and 111 each coordinate Mg(2+). ATP-binding positions include 111 to 114 (EGAG), 175 to 176 (NQ), and 204 to 206 (PLL).

The protein belongs to the dethiobiotin synthetase family. In terms of assembly, homodimer. It depends on Mg(2+) as a cofactor.

The protein localises to the cytoplasm. It carries out the reaction (7R,8S)-7,8-diammoniononanoate + CO2 + ATP = (4R,5S)-dethiobiotin + ADP + phosphate + 3 H(+). It functions in the pathway cofactor biosynthesis; biotin biosynthesis; biotin from 7,8-diaminononanoate: step 1/2. Functionally, catalyzes a mechanistically unusual reaction, the ATP-dependent insertion of CO2 between the N7 and N8 nitrogen atoms of 7,8-diaminopelargonic acid (DAPA, also called 7,8-diammoniononanoate) to form a ureido ring. This chain is ATP-dependent dethiobiotin synthetase BioD, found in Geobacillus kaustophilus (strain HTA426).